A 215-amino-acid chain; its full sequence is Mediator of RNA polymerase II transcription subunit 20 (215 aa).

This sequence belongs to the Mediator complex subunit 20 family. Component of the Mediator complex.

Its subcellular location is the nucleus. Functionally, component of the Mediator complex, a coactivator involved in the regulated transcription of nearly all RNA polymerase II-dependent genes. Mediator functions as a bridge to convey information from gene-specific regulatory proteins to the basal RNA polymerase II transcription machinery. Mediator is recruited to promoters by direct interactions with regulatory proteins and serves as a scaffold for the assembly of a functional preinitiation complex with RNA polymerase II and the general transcription factors. The protein is Mediator of RNA polymerase II transcription subunit 20 (SRB2) of Candida glabrata (strain ATCC 2001 / BCRC 20586 / JCM 3761 / NBRC 0622 / NRRL Y-65 / CBS 138) (Yeast).